Consider the following 1279-residue polypeptide: Maestro heat-like repeat-containing protein family member 7 (1279 aa).

Positions 1–145 are disordered; it reads MALSRGTSLI…NSSRPCSEDV (145 aa). Over residues 39–61 the composition is skewed to low complexity; the sequence is PDLALAPPPEHALALTPALHPAL. 2 stretches are compositionally biased toward polar residues: residues 71–106 and 124–140; these read PVSN…NHTS and PSST…SSRP. N-linked (GlcNAc...) asparagine glycans are attached at residues asparagine 200, asparagine 210, asparagine 255, asparagine 267, and asparagine 296. Serine 356 bears the Phosphoserine mark. A glycan (N-linked (GlcNAc...) asparagine) is linked at asparagine 541. Helical transmembrane passes span 548–568 and 722–742; these read TLVT…LLLG and LLPI…ALLM. 4 HEAT repeats span residues 913–950, 992–1029, 1035–1072, and 1080–1117; these read QELC…MEQV, AKVQ…GQGK, AVYV…KLQT, and EQLT…FMNW.

The protein resides in the membrane. This is Maestro heat-like repeat-containing protein family member 7 (Mroh7) from Mus musculus (Mouse).